A 544-amino-acid polypeptide reads, in one-letter code: Histone-arginine methyltransferase CARMER (544 aa).

In terms of domain architecture, SAM-dependent MTase PRMT-type spans 150-459 (ASQYFQFYGY…QSYDVTIDLH (310 aa)). Residues Gln-163, Arg-172, Gly-196, Glu-218, Glu-247, and Thr-275 each contribute to the S-adenosyl-L-methionine site. Residues 505 to 520 (DTQQQQQGSRNSNSML) show a composition bias toward polar residues. Positions 505 to 527 (DTQQQQQGSRNSNSMLNGGLSVN) are disordered. Asymmetric dimethylarginine; by autocatalysis is present on Arg-514.

It belongs to the class I-like SAM-binding methyltransferase superfamily. Protein arginine N-methyltransferase family. In terms of assembly, homodimer. In terms of processing, the dimethylated protein is the major form.

Its subcellular location is the cytoplasm. It localises to the nucleus. The enzyme catalyses L-arginyl-[protein] + 2 S-adenosyl-L-methionine = N(omega),N(omega)-dimethyl-L-arginyl-[protein] + 2 S-adenosyl-L-homocysteine + 2 H(+). In terms of biological role, methylates (mono- and asymmetric dimethylation) the guanidino nitrogens of arginyl residues in proteins. May methylate histone H3 at 'Arg-17' and activate transcription via chromatin remodeling. The polypeptide is Histone-arginine methyltransferase CARMER (Art4) (Drosophila grimshawi (Hawaiian fruit fly)).